The following is a 387-amino-acid chain: Yellow-related salivary protein ASP2 (387 aa).

The first 18 residues, 1–18, serve as a signal peptide directing secretion; the sequence is MKIFLCLIVVVSLQGVLA.

It belongs to the major royal jelly protein family. Female salivary gland (at protein level).

Its subcellular location is the secreted. Functionally, probably modulates blood feeding of sand flies on vertebrate species by binding and sequestering different mediators involved in the host response. Binds biogenic amines. Binds octopamine with high affinity. Binds serotonin and dopamine with medium affinity. Poorly binds histamine. Does not bind noradrenaline and adrenaline. The sequence is that of Yellow-related salivary protein ASP2 from Phlebotomus orientalis (Phlebotomine sand fly).